The following is a 206-amino-acid chain: AT-hook motif nuclear-localized protein 28 (206 aa).

Disordered regions lie at residues 1 to 21 and 160 to 206; these read METV…PKAP and TEEE…PSPY. A DNA-binding region (a.T hook) is located at residues 5–17; that stretch reads GRPRGRPRGSKNK. The segment covering 7–18 has biased composition (basic residues); sequence PRGRPRGSKNKP. The 147-residue stretch at 27 to 173 folds into the PPC domain; the sequence is DPPMSPYILE…QRNSAEGEEE (147 aa).

It localises to the nucleus. Transcription factor that specifically binds AT-rich DNA sequences related to the nuclear matrix attachment regions (MARs). In Arabidopsis thaliana (Mouse-ear cress), this protein is AT-hook motif nuclear-localized protein 28.